The following is a 400-amino-acid chain: Acetate kinase (400 aa).

A Mg(2+)-binding site is contributed by Asn-7. Lys-14 serves as a coordination point for ATP. Residue Arg-85 participates in substrate binding. Asp-142 functions as the Proton donor/acceptor in the catalytic mechanism. Residues 202 to 206 (HLGNG), 278 to 280 (DMR), and 326 to 330 (GIGEN) each bind ATP. Glu-380 serves as a coordination point for Mg(2+).

It belongs to the acetokinase family. In terms of assembly, homodimer. Mg(2+) serves as cofactor. The cofactor is Mn(2+).

The protein resides in the cytoplasm. It catalyses the reaction acetate + ATP = acetyl phosphate + ADP. It participates in metabolic intermediate biosynthesis; acetyl-CoA biosynthesis; acetyl-CoA from acetate: step 1/2. Its function is as follows. Catalyzes the formation of acetyl phosphate from acetate and ATP. Can also catalyze the reverse reaction. In Deinococcus deserti (strain DSM 17065 / CIP 109153 / LMG 22923 / VCD115), this protein is Acetate kinase.